The following is a 132-amino-acid chain: ATP synthase epsilon chain (132 aa).

It belongs to the ATPase epsilon chain family. F-type ATPases have 2 components, CF(1) - the catalytic core - and CF(0) - the membrane proton channel. CF(1) has five subunits: alpha(3), beta(3), gamma(1), delta(1), epsilon(1). CF(0) has three main subunits: a, b and c.

Its subcellular location is the cell membrane. Its function is as follows. Produces ATP from ADP in the presence of a proton gradient across the membrane. This chain is ATP synthase epsilon chain, found in Bacillus velezensis (strain DSM 23117 / BGSC 10A6 / LMG 26770 / FZB42) (Bacillus amyloliquefaciens subsp. plantarum).